We begin with the raw amino-acid sequence, 487 residues long: (S)-N-methylcoclaurine 3'-hydroxylase isozyme 1 (487 aa).

Residues 4–24 (TVALIAVIISSILYLLFGGSG) form a helical membrane-spanning segment. Residue Cys429 participates in heme binding.

This sequence belongs to the cytochrome P450 family. It depends on heme as a cofactor.

It is found in the endoplasmic reticulum membrane. The protein localises to the microsome membrane. The catalysed reaction is (S)-N-methylcoclaurine + reduced [NADPH--hemoprotein reductase] + O2 = (S)-3'-hydroxy-N-methylcoclaurine + oxidized [NADPH--hemoprotein reductase] + H2O + H(+). It functions in the pathway alkaloid biosynthesis; (S)-reticuline biosynthesis; (S)-reticuline from (S)-norcoclaurine: step 3/4. Its function is as follows. 3'-hydroxylation of (S)-N-methylcoclaurine. The polypeptide is (S)-N-methylcoclaurine 3'-hydroxylase isozyme 1 (CYP80B1) (Eschscholzia californica (California poppy)).